We begin with the raw amino-acid sequence, 660 residues long: Polyadenylation factor subunit 2 (660 aa).

A compositionally biased stretch (basic and acidic residues) spans 1-12 (MSYEPRGDHDKG). Positions 1 to 32 (MSYEPRGDHDKGYGGGGGHDGLPPRNRGRRPV) are disordered. WD repeat units lie at residues 94-133 (KIKH…FETI), 136-176 (AHDS…ESIR), 177-216 (GHTD…TDMT), 219-258 (GHGW…CLTT), 261-301 (GHKN…DIAL), 304-344 (GHEK…TAPD), and 376-415 (AHDF…EAPE). A disordered region spans residues 562-660 (KAGYQPPPPP…QSKGNYTRVR (99 aa)). The segment covering 566–610 (QPPPPPGSAGAPMPPPGILPPGLIPPPGAAGFPMPPPGFAPPPLI) has biased composition (pro residues).

The protein resides in the nucleus. Functionally, required for 3'-end cleavage and polyadenylation of pre-mRNAs. Also involved in chromosome segregation where it has a role in chromosome attachment to the mitotic spindle. The sequence is that of Polyadenylation factor subunit 2 (paa-1) from Neurospora crassa (strain ATCC 24698 / 74-OR23-1A / CBS 708.71 / DSM 1257 / FGSC 987).